The following is a 355-amino-acid chain: Peptide chain release factor 1 (355 aa).

Residue Gln233 is modified to N5-methylglutamine. Over residues Arg281–Arg293 the composition is skewed to basic and acidic residues. The segment at Arg281–Tyr308 is disordered.

This sequence belongs to the prokaryotic/mitochondrial release factor family. Methylated by PrmC. Methylation increases the termination efficiency of RF1.

The protein resides in the cytoplasm. Its function is as follows. Peptide chain release factor 1 directs the termination of translation in response to the peptide chain termination codons UAG and UAA. The polypeptide is Peptide chain release factor 1 (Rickettsia akari (strain Hartford)).